The primary structure comprises 196 residues: Large ribosomal subunit protein eL15 (196 aa).

The tract at residues 153 to 196 (DPSSRGRATRGKTSAGRKGRGMATRGKGTEKTRPSIRAYKSRGK) is disordered. Over residues 159-172 (RATRGKTSAGRKGR) the composition is skewed to basic residues.

Belongs to the eukaryotic ribosomal protein eL15 family.

This is Large ribosomal subunit protein eL15 from Methanosarcina acetivorans (strain ATCC 35395 / DSM 2834 / JCM 12185 / C2A).